Here is a 288-residue protein sequence, read N- to C-terminus: Bifunctional protein FolD (288 aa).

NADP(+) is bound by residues 171–173 (GRS), Ser196, and Thr237.

This sequence belongs to the tetrahydrofolate dehydrogenase/cyclohydrolase family. In terms of assembly, homodimer.

The catalysed reaction is (6R)-5,10-methylene-5,6,7,8-tetrahydrofolate + NADP(+) = (6R)-5,10-methenyltetrahydrofolate + NADPH. It carries out the reaction (6R)-5,10-methenyltetrahydrofolate + H2O = (6R)-10-formyltetrahydrofolate + H(+). It participates in one-carbon metabolism; tetrahydrofolate interconversion. Functionally, catalyzes the oxidation of 5,10-methylenetetrahydrofolate to 5,10-methenyltetrahydrofolate and then the hydrolysis of 5,10-methenyltetrahydrofolate to 10-formyltetrahydrofolate. The protein is Bifunctional protein FolD of Elusimicrobium minutum (strain Pei191).